The chain runs to 198 residues: uncharacterized protein (198 aa).

Positions 1–23 (MYFGKTRQSDQSGRVPPNQNVTT) are disordered. Residues 9–23 (SDQSGRVPPNQNVTT) are compositionally biased toward polar residues. 3 residues coordinate Mo-molybdopterin: Cys75, His144, and Arg149.

Mo-molybdopterin serves as cofactor.

This is an uncharacterized protein from Bacillus subtilis (strain 168).